The following is a 142-amino-acid chain: Large ribosomal subunit protein uL16 (142 aa).

It belongs to the universal ribosomal protein uL16 family. In terms of assembly, part of the 50S ribosomal subunit.

In terms of biological role, binds 23S rRNA and is also seen to make contacts with the A and possibly P site tRNAs. The protein is Large ribosomal subunit protein uL16 of Gemmatimonas aurantiaca (strain DSM 14586 / JCM 11422 / NBRC 100505 / T-27).